Reading from the N-terminus, the 231-residue chain is MTITIALPSKGRMKDDASAIFERAGMKIVAVGNDRSYRGRVEGWDDVEVAFLSASEISREVGSGAVDFGVTGEDLVREGIADVDARVEFAARLGFGHADVVVAVPEVWYDVDTMADLGDVAADFRARHGRRLAIATKYWRLTQQFFSGSHGIQLYRIVESLGATEGAPASGSADIIVDITSTGSTLKANHLKILSDGVILRSEACLVRARKPAHDGYPMIDRIISSVRSVL.

Belongs to the ATP phosphoribosyltransferase family. Short subfamily. As to quaternary structure, heteromultimer composed of HisG and HisZ subunits.

It is found in the cytoplasm. It carries out the reaction 1-(5-phospho-beta-D-ribosyl)-ATP + diphosphate = 5-phospho-alpha-D-ribose 1-diphosphate + ATP. Its pathway is amino-acid biosynthesis; L-histidine biosynthesis; L-histidine from 5-phospho-alpha-D-ribose 1-diphosphate: step 1/9. Its function is as follows. Catalyzes the condensation of ATP and 5-phosphoribose 1-diphosphate to form N'-(5'-phosphoribosyl)-ATP (PR-ATP). Has a crucial role in the pathway because the rate of histidine biosynthesis seems to be controlled primarily by regulation of HisG enzymatic activity. This Sinorhizobium fredii (strain NBRC 101917 / NGR234) protein is ATP phosphoribosyltransferase (hisG).